The sequence spans 309 residues: Probable ABC transporter permease protein YqgH (309 aa).

6 helical membrane-spanning segments follow: residues 30 to 50 (MIVT…TIFL), 88 to 108 (FIFG…PLGI), 133 to 153 (LVGI…VPFI), 165 to 185 (LLAG…SISA), 214 to 234 (LVPA…ARAF), and 280 to 300 (NTLW…ILLI). The ABC transmembrane type-1 domain occupies 89–300 (IFGSFAVTIL…VMSFLFILLI (212 aa)).

This sequence belongs to the binding-protein-dependent transport system permease family. CysTW subfamily.

The protein localises to the cell membrane. Part of the binding-protein-dependent transport system YqgGHIJK. Probably responsible for the translocation of the substrate across the membrane. The protein is Probable ABC transporter permease protein YqgH (yqgH) of Bacillus subtilis (strain 168).